The following is an 810-amino-acid chain: LPS-assembly protein LptD (810 aa).

A signal peptide spans 1–29 (MTKRTLGYSYPIALTISLVPALTPAIVQA).

The protein belongs to the LptD family. Component of the lipopolysaccharide transport and assembly complex. Interacts with LptE and LptA.

It is found in the cell outer membrane. Functionally, together with LptE, is involved in the assembly of lipopolysaccharide (LPS) at the surface of the outer membrane. The sequence is that of LPS-assembly protein LptD from Aeromonas hydrophila subsp. hydrophila (strain ATCC 7966 / DSM 30187 / BCRC 13018 / CCUG 14551 / JCM 1027 / KCTC 2358 / NCIMB 9240 / NCTC 8049).